Here is a 452-residue protein sequence, read N- to C-terminus: Maltoporin (452 aa).

An N-terminal signal peptide occupies residues 1–25; that stretch reads MMITLRKLPLAVAVAAGVMSAQAMA.

It belongs to the porin LamB (TC 1.B.3) family. In terms of assembly, homotrimer formed of three 18-stranded antiparallel beta-barrels, containing three independent channels.

The protein localises to the cell outer membrane. The catalysed reaction is beta-maltose(in) = beta-maltose(out). Its function is as follows. Involved in the transport of maltose and maltodextrins. This is Maltoporin from Salmonella newport (strain SL254).